Consider the following 455-residue polypeptide: Mycosin-4 (455 aa).

Residues 1 to 25 (MTTSRTLRLLVVSALATLSGLGTPV) form the signal peptide. Residues 74–384 (SAQLADLDQV…NGTVDALAAV (311 aa)) form the Peptidase S8 domain. Residues Asp-98, His-129, and Ser-329 each act as charge relay system in the active site. The interval 389-417 (IPQAGTATSDPAPVAVPVPRRSTPGPSDR) is disordered. The segment covering 394-412 (TATSDPAPVAVPVPRRSTP) has biased composition (low complexity). Residues 432-452 (LALMATLATASRRLRPGRNGI) traverse the membrane as a helical segment.

The protein belongs to the peptidase S8 family.

The protein localises to the cell membrane. This Mycobacterium tuberculosis (strain ATCC 25618 / H37Rv) protein is Mycosin-4.